The primary structure comprises 121 residues: Small ribosomal subunit protein uS13 (121 aa).

The segment at 91–121 is disordered; that stretch reads HRKGLPLRGQRTRTNARTRKGPRKAGVALKK.

This sequence belongs to the universal ribosomal protein uS13 family. In terms of assembly, part of the 30S ribosomal subunit. Forms a loose heterodimer with protein S19. Forms two bridges to the 50S subunit in the 70S ribosome.

Located at the top of the head of the 30S subunit, it contacts several helices of the 16S rRNA. In the 70S ribosome it contacts the 23S rRNA (bridge B1a) and protein L5 of the 50S subunit (bridge B1b), connecting the 2 subunits; these bridges are implicated in subunit movement. Contacts the tRNAs in the A and P-sites. The chain is Small ribosomal subunit protein uS13 from Cupriavidus pinatubonensis (strain JMP 134 / LMG 1197) (Cupriavidus necator (strain JMP 134)).